A 65-amino-acid polypeptide reads, in one-letter code: Large ribosomal subunit protein bL35 (65 aa).

The disordered stretch occupies residues 1–29; the sequence is MPKMKTNRGAAKRFKKTGSGRIKRGKAFT. Basic residues predominate over residues 10–26; the sequence is AAKRFKKTGSGRIKRGK.

This sequence belongs to the bacterial ribosomal protein bL35 family.

The polypeptide is Large ribosomal subunit protein bL35 (Desulfotalea psychrophila (strain LSv54 / DSM 12343)).